The chain runs to 494 residues: Solute carrier family 2, facilitated glucose transporter member 3 (494 aa).

Topologically, residues 1 to 10 (MGTTKVTPYL) are cytoplasmic. A helical membrane pass occupies residues 11–32 (IFATSVAAIGSFQFGYNTGVIN). The Extracellular segment spans residues 33–64 (APEMIIRDFLNYTLDEKLDEPPSRLLLTNLWS). A glycan (N-linked (GlcNAc...) asparagine) is linked at Asn-43. Residues 65-84 (LSVAIFSVGGMIGSFSVGLF) form a helical membrane-spanning segment. Residues 85–89 (NRFGR) lie on the Cytoplasmic side of the membrane. Residues 90-110 (RNSMLIVNLLAVIGGCLMGFC) traverse the membrane as a helical segment. Residues 111–117 (KISESVE) lie on the Extracellular side of the membrane. A helical transmembrane segment spans residues 118–141 (MLILGRLVIGVFCGLCTGFVPMYI). Residues 142–152 (GEISPTALRGA) are Cytoplasmic-facing. Residues 153–173 (FGTLNQLGIVIGILVAQIFGL) form a helical membrane-spanning segment. Gln-158 serves as a coordination point for D-glucose. Residues 174-182 (EIILGSEVL) lie on the Extracellular side of the membrane. The helical transmembrane segment at 183 to 203 (WPVLLGFTIIPAILQSAALPF) threads the bilayer. Residues 204–268 (CPESPRFLLI…LFRAPSYRQP (65 aa)) lie on the Cytoplasmic side of the membrane. The residue at position 231 (Thr-231) is a Phosphothreonine. A helical transmembrane segment spans residues 269–289 (IIISIVLQLSQQLSGINAVFY). The interval 276-278 (QLS) is important for selectivity against fructose. D-glucose is bound by residues 279 to 280 (QQ) and Asn-285. The Extracellular segment spans residues 290–303 (YSTGIFKDAGVKEP). The chain crosses the membrane as a helical span at residues 304–324 (IYATIGAGVVNTIFTIVSVFL). Asn-314 contacts D-glucose. Over 325 to 330 (VERAGR) the chain is Cytoplasmic. A helical transmembrane segment spans residues 331–351 (RTLHLIGLGGMALCSVLMTVS). The Extracellular segment spans residues 352 to 362 (LLLKDKYDTMS). A helical membrane pass occupies residues 363–388 (LVCIAAILIYVAFFEIGPGPIPWFIV). Glu-377 and Trp-385 together coordinate D-glucose. Over 389 to 398 (AELFSQGPRP) the chain is Cytoplasmic. A helical transmembrane segment spans residues 399–419 (AAMAVAGCSNWTSNFLVGLLF). Residues 420–428 (PSAAYYLGA) lie on the Extracellular side of the membrane. Residues 429 to 449 (YVFVIFAVFLVAFFIFTFFKV) form a helical membrane-spanning segment. Residues 450–494 (PETRGRTFEDITRAFEGQAAEANKLGKGPTMEMNSIQPIETTTHV) lie on the Cytoplasmic side of the membrane. Ser-484 bears the Phosphoserine mark. Thr-491 bears the Phosphothreonine mark.

This sequence belongs to the major facilitator superfamily. Sugar transporter (TC 2.A.1.1) family. Glucose transporter subfamily. Interacts with SMIM43; the interaction may promote SLC2A3-mediated glucose transport to meet the energy needs of mesendoderm differentiation. As to expression, detected in stomach, placenta, lung and brain.

Its subcellular location is the cell membrane. The protein resides in the perikaryon. It localises to the cell projection. The catalysed reaction is D-glucose(out) = D-glucose(in). The enzyme catalyses D-galactose(in) = D-galactose(out). With respect to regulation, deoxyglucose transport is inhibited by D-glucose, D-galactose and maltose. Galactose transport is inhibited by D-glucose and maltose. Functionally, facilitative glucose transporter. Can also mediate the uptake of various other monosaccharides across the cell membrane. Mediates the uptake of glucose, 2-deoxyglucose, galactose, mannose, xylose and fucose, and probably also dehydroascorbate. Does not mediate fructose transport. Required for mesendoderm differentiation. The chain is Solute carrier family 2, facilitated glucose transporter member 3 from Oryctolagus cuniculus (Rabbit).